The primary structure comprises 314 residues: Olfactory receptor 1C1 (314 aa).

The Extracellular segment spans residues 1–25 (MEKRNLTVVREFVLLGLPSSAEQQH). A helical transmembrane segment spans residues 26–49 (LLSVLFLCMYLATTLGNMLIIATI). Residues 50-57 (GFDSHLHS) lie on the Cytoplasmic side of the membrane. A helical transmembrane segment spans residues 58–79 (PMYFFLSNLAFVDICFTSTTVP). Over 80–100 (QMVVNILTGTKTISFAGCLTQ) the chain is Extracellular. Cysteines 97 and 189 form a disulfide. A helical membrane pass occupies residues 101 to 120 (LFFFVSFVNMDSLLLCVMAY). Residues 121 to 139 (DRYVAICHPLHYTARMNLC) are Cytoplasmic-facing. Residues 140–158 (LCVQLVAGLWLVTYLHALL) traverse the membrane as a helical segment. At 159–195 (HTVLIAQLSFCASNIIHHFFCDLNPLLQLSCSDVSFN) the chain is on the extracellular side. A helical transmembrane segment spans residues 196-219 (VMIIFAVGGLLALTPLVCILVSYG). Over 220 to 236 (LIFSTVLKITSTQGKQR) the chain is Cytoplasmic. The chain crosses the membrane as a helical span at residues 237–259 (AVSTCSCHLSVVVLFYGTAIAVY). Residues 260-272 (FSPSSPHMPESDT) are Extracellular-facing. The chain crosses the membrane as a helical span at residues 273-292 (LSTIMYSMVAPMLNPFIYTL). The Cytoplasmic segment spans residues 293–314 (RNRDMKRGLQKMLLKCTVFQQQ).

This sequence belongs to the G-protein coupled receptor 1 family.

The protein resides in the cell membrane. In terms of biological role, odorant receptor. The sequence is that of Olfactory receptor 1C1 (OR1C1) from Homo sapiens (Human).